Here is a 519-residue protein sequence, read N- to C-terminus: Lysine 5,6-aminomutase alpha subunit (519 aa).

An adenosylcob(III)alamin-binding site is contributed by 57 to 59 (DEV). Pyridoxal 5'-phosphate contacts are provided by residues 187–192 (RTTGQS), serine 241, tyrosine 266, arginine 271, and asparagine 302.

It belongs to the KamD family. Heterotetramer of 2 alpha and 2 beta subunits. Adenosylcob(III)alamin is required as a cofactor. Pyridoxal 5'-phosphate serves as cofactor.

It carries out the reaction (3S)-3,6-diaminohexanoate = (3S,5S)-3,5-diaminohexanoate. It catalyses the reaction D-lysine = (2R,5S)-2,5-diaminohexanoate. The protein operates within amino-acid metabolism; lysine degradation. Its activity is regulated as follows. Rapidly inactivated in the presence of D-lysine and to a lesser extent in the absence of adenosylcobalamin (Adocbl). Activity is stable in the presence of Adocbl when D-lysine is absent. Adocbl imparts thermal stability at 37 degrees Celsius. Its function is as follows. Catalyzes the migration of the L-beta-lysine and D-lysine epsilon amino group to the delta carbon to produce 3,5-diaminohexanoate and 2,5-diaminohexanoate, respectively. In Acetoanaerobium sticklandii (strain ATCC 12662 / DSM 519 / JCM 1433 / CCUG 9281 / NCIMB 10654 / HF) (Clostridium sticklandii), this protein is Lysine 5,6-aminomutase alpha subunit (kamD).